A 446-amino-acid chain; its full sequence is Tol-Pal system protein TolB (446 aa).

The first 36 residues, 1 to 36 (MMDVQTVRRGNAVQSLMSKLILPLVMAVAFALPARA), serve as a signal peptide directing secretion. Residues 424–446 (GYNERPSPTPTFASDPAWSPRIQ) form a disordered region.

This sequence belongs to the TolB family. In terms of assembly, the Tol-Pal system is composed of five core proteins: the inner membrane proteins TolA, TolQ and TolR, the periplasmic protein TolB and the outer membrane protein Pal. They form a network linking the inner and outer membranes and the peptidoglycan layer.

Its subcellular location is the periplasm. Functionally, part of the Tol-Pal system, which plays a role in outer membrane invagination during cell division and is important for maintaining outer membrane integrity. The chain is Tol-Pal system protein TolB from Parvibaculum lavamentivorans (strain DS-1 / DSM 13023 / NCIMB 13966).